Consider the following 120-residue polypeptide: uncharacterized protein (120 aa).

Residues 45 to 78 are a coiled coil; it reads QLISESLKIAQKDLMEVRKELRKRKIAIRETERD.

This is an uncharacterized protein from Bacillus subtilis (strain 168).